The chain runs to 383 residues: Probable butyrate kinase (383 aa).

Belongs to the acetokinase family.

Its subcellular location is the cytoplasm. It carries out the reaction butanoate + ATP = butanoyl phosphate + ADP. This is Probable butyrate kinase from Deinococcus radiodurans (strain ATCC 13939 / DSM 20539 / JCM 16871 / CCUG 27074 / LMG 4051 / NBRC 15346 / NCIMB 9279 / VKM B-1422 / R1).